We begin with the raw amino-acid sequence, 327 residues long: Interleukin-12 subunit beta (327 aa).

The signal sequence occupies residues 1 to 22; sequence MHPQQLVVSWFSLVLLTSPIVA. Residues 23–106 form the Ig-like C2-type domain; it reads IWELEKNVYV…LSRSLLLLHK (84 aa). Cysteines 50 and 90 form a disulfide. N-linked (GlcNAc...) asparagine glycosylation is present at asparagine 223. Residues 238-327 form the Fibronectin type-III domain; that stretch reads PPKNLQLRPL…WSEWASVSCS (90 aa).

This sequence belongs to the IL-12B family. Heterodimer with IL12A; disulfide-linked. The heterodimer is known as interleukin IL-12. Heterodimer with IL23A; disulfide-linked. The heterodimer is known as interleukin IL-23. Also secreted as a monomer. Interacts with NBR1; this interaction promotes IL-12 secretion.

It localises to the secreted. Its function is as follows. Cytokine that can act as a growth factor for activated T and NK cells, enhance the lytic activity of NK/lymphokine-activated killer cells, and stimulate the production of IFN-gamma by resting PBMC. Functionally, associates with IL23A to form the IL-23 interleukin, a heterodimeric cytokine which functions in innate and adaptive immunity. IL-23 may constitute with IL-17 an acute response to infection in peripheral tissues. IL-23 binds to a heterodimeric receptor complex composed of IL12RB1 and IL23R, activates the Jak-Stat signaling cascade, stimulates memory rather than naive T-cells and promotes production of pro-inflammatory cytokines. IL-23 induces autoimmune inflammation and thus may be responsible for autoimmune inflammatory diseases and may be important for tumorigenesis. The chain is Interleukin-12 subunit beta (IL12B) from Cervus elaphus (Red deer).